Here is a 786-residue protein sequence, read N- to C-terminus: Endonuclease MutS2 (786 aa).

335–342 (GPNTGGKT) is an ATP binding site. The 76-residue stretch at 711–786 (LDLRGERFEN…GLGVTVVELK (76 aa)) folds into the Smr domain.

The protein belongs to the DNA mismatch repair MutS family. MutS2 subfamily. Homodimer. Binds to stalled ribosomes, contacting rRNA.

Its function is as follows. Endonuclease that is involved in the suppression of homologous recombination and thus may have a key role in the control of bacterial genetic diversity. In terms of biological role, acts as a ribosome collision sensor, splitting the ribosome into its 2 subunits. Detects stalled/collided 70S ribosomes which it binds and splits by an ATP-hydrolysis driven conformational change. Acts upstream of the ribosome quality control system (RQC), a ribosome-associated complex that mediates the extraction of incompletely synthesized nascent chains from stalled ribosomes and their subsequent degradation. Probably generates substrates for RQC. The protein is Endonuclease MutS2 of Bacillus thuringiensis (strain Al Hakam).